Reading from the N-terminus, the 375-residue chain is MLKVGILGSTGSVGSQALDVIRKYKDQIKVELLGASKLSENLINQIKEFKPSYVYVENAEEKSIDDIKVLVGEDGLRRAVNLDLDLFINAIAGIKGILPTYLLLKYNKTLATANKEAIICLGELLKDKYKKILPIDSEHSAIFQILKDSNQKEVRRIILTASGGPFVNMPAEDFENITVKQALIHPRWSMGKKITIDSATLMNKGLEVIEAHYLFSMPYEKIDVLIHPESIIHGMVEFVDGTVISNMSNPDMKIPISYALFYPERKFLSDNYLDFTKIKSLNFLKPDTEKFPLLKLAVECGKKGGVYPTVLTVADEIAVNYFLEERIKFTDIHKIILETLEKFDYNKLDSVDDIFYIIDKTINLATEIAKKYGST.

NADPH contacts are provided by T10, G11, S12, V13, K37, and N114. K115 lines the 1-deoxy-D-xylulose 5-phosphate pocket. Residue E116 participates in NADPH binding. D136 provides a ligand contact to Mn(2+). Residues S137, E138, S162, and H185 each contribute to the 1-deoxy-D-xylulose 5-phosphate site. E138 is a Mn(2+) binding site. Position 191 (G191) interacts with NADPH. Positions 198, 203, 204, and 207 each coordinate 1-deoxy-D-xylulose 5-phosphate. E207 contacts Mn(2+).

This sequence belongs to the DXR family. Requires Mg(2+) as cofactor. It depends on Mn(2+) as a cofactor.

It carries out the reaction 2-C-methyl-D-erythritol 4-phosphate + NADP(+) = 1-deoxy-D-xylulose 5-phosphate + NADPH + H(+). The protein operates within isoprenoid biosynthesis; isopentenyl diphosphate biosynthesis via DXP pathway; isopentenyl diphosphate from 1-deoxy-D-xylulose 5-phosphate: step 1/6. Catalyzes the NADPH-dependent rearrangement and reduction of 1-deoxy-D-xylulose-5-phosphate (DXP) to 2-C-methyl-D-erythritol 4-phosphate (MEP). This chain is 1-deoxy-D-xylulose 5-phosphate reductoisomerase, found in Sulfurihydrogenibium sp. (strain YO3AOP1).